Consider the following 277-residue polypeptide: Hydroxypyruvate/pyruvate aldolase (277 aa).

Catalysis depends on histidine 54, which acts as the Proton acceptor. Residues glutamate 158 and aspartate 184 each coordinate a divalent metal cation.

It belongs to the HpcH/HpaI aldolase family. It depends on a divalent metal cation as a cofactor.

It carries out the reaction D-glyceraldehyde + 3-hydroxypyruvate = (3R,4S,5R)-3,4,5,6-tetrahydroxy-2-oxohexanoate. The enzyme catalyses D-glyceraldehyde + 3-hydroxypyruvate = 2-dehydro-D-gluconate. The catalysed reaction is D-glyceraldehyde + 3-hydroxypyruvate = 2-dehydro-D-galactonate. It catalyses the reaction D-glyceraldehyde + pyruvate = 2-dehydro-3-deoxy-L-galactonate. Its function is as follows. Aldolase which can catalyze in vitro the aldolisation reaction between hydroxypyruvate (HPA) or pyruvate (PA) and D-glyceraldehyde (D-GA). The condensation of hydroxypyruvate and D-glyceraldehyde produces (3R,4S,5R)-3,4,5,6-tetrahydroxy-2-oxohexanoate as the major product, 2-dehydro-D-gluconate and 2-dehydro-D-galactonate. The condensation of pyruvate and D-glyceraldehyde produces 2-dehydro-3-deoxy-L-galactonate as the major product. The protein is Hydroxypyruvate/pyruvate aldolase of Deinococcus radiodurans (strain ATCC 13939 / DSM 20539 / JCM 16871 / CCUG 27074 / LMG 4051 / NBRC 15346 / NCIMB 9279 / VKM B-1422 / R1).